The primary structure comprises 253 residues: Pre-mRNA-splicing factor SPF27 homolog (253 aa).

A coiled-coil region spans residues 124–235; the sequence is KQYLQKNQRS…IDSFKKEAAE (112 aa).

The protein belongs to the SPF27 family. As to quaternary structure, component of the multiprotein assembly MOS4-associated complex (MAC) at least composed of MOS4, CDC5 and PRL1. Interacts with CYCL1-1 and CDC5. Associated with the spliceosome. Interacts with ENY2.

It is found in the nucleus. In terms of biological role, component of the MAC complex that probably regulates defense responses through transcriptional control and thereby is essential for plant innate immunity. Involved in mRNA splicing. In Arabidopsis thaliana (Mouse-ear cress), this protein is Pre-mRNA-splicing factor SPF27 homolog (MOS4).